Reading from the N-terminus, the 184-residue chain is SsrA-binding protein (184 aa).

Residues 1 to 11 (MAAKKSTPTDS) are compositionally biased toward polar residues. The disordered stretch occupies residues 1–31 (MAAKKSTPTDSGKSKGKKNKAQKGAGQKGAG).

Belongs to the SmpB family.

The protein localises to the cytoplasm. Required for rescue of stalled ribosomes mediated by trans-translation. Binds to transfer-messenger RNA (tmRNA), required for stable association of tmRNA with ribosomes. tmRNA and SmpB together mimic tRNA shape, replacing the anticodon stem-loop with SmpB. tmRNA is encoded by the ssrA gene; the 2 termini fold to resemble tRNA(Ala) and it encodes a 'tag peptide', a short internal open reading frame. During trans-translation Ala-aminoacylated tmRNA acts like a tRNA, entering the A-site of stalled ribosomes, displacing the stalled mRNA. The ribosome then switches to translate the ORF on the tmRNA; the nascent peptide is terminated with the 'tag peptide' encoded by the tmRNA and targeted for degradation. The ribosome is freed to recommence translation, which seems to be the essential function of trans-translation. This chain is SsrA-binding protein, found in Corynebacterium jeikeium (strain K411).